We begin with the raw amino-acid sequence, 111 residues long: uncharacterized protein (111 aa).

As to quaternary structure, homodimer, or homotetramer.

This is an uncharacterized protein from Bacillus subtilis (strain 168).